The chain runs to 203 residues: MMTAIAIHPEVLRDVVAAALGDKARSVTVALGEVTVEVSAAQYLEAMQVLHTAPDCRFEVLVDLCGVDYSTYAEVGREGPRFAVVSHLLSISLNQRLRVRVFCTDDDFPVVASVTSVWAGANWFEREAFDLFGIVFDGHDDLRRILTDYGFIGHPFRKDFPLSGHVEMRYDPEQQRVVYQPVTIEPREITPRIIREDNYGGLH.

This sequence belongs to the complex I 30 kDa subunit family. As to quaternary structure, NDH-1 is composed of 14 different subunits. Subunits NuoB, C, D, E, F, and G constitute the peripheral sector of the complex.

Its subcellular location is the cell inner membrane. It carries out the reaction a quinone + NADH + 5 H(+)(in) = a quinol + NAD(+) + 4 H(+)(out). In terms of biological role, NDH-1 shuttles electrons from NADH, via FMN and iron-sulfur (Fe-S) centers, to quinones in the respiratory chain. The immediate electron acceptor for the enzyme in this species is believed to be ubiquinone. Couples the redox reaction to proton translocation (for every two electrons transferred, four hydrogen ions are translocated across the cytoplasmic membrane), and thus conserves the redox energy in a proton gradient. The protein is NADH-quinone oxidoreductase subunit C of Delftia acidovorans (strain DSM 14801 / SPH-1).